We begin with the raw amino-acid sequence, 512 residues long: Maturase K (512 aa).

This sequence belongs to the intron maturase 2 family. MatK subfamily.

Its subcellular location is the plastid. It is found in the chloroplast. Functionally, usually encoded in the trnK tRNA gene intron. Probably assists in splicing its own and other chloroplast group II introns. This Lilium henryi (Henry's lily) protein is Maturase K.